The following is a 328-amino-acid chain: MTTHLLVTGAAGFIGSQYVRTLLGPGGPPDVVVTALDALTYAGNPDNLAAVRGHPRYRFERGDICDAPGRRVMAGQDQVVHLAAESHVDRSLLDASVFVRTNVHGTQTLLDAATRHGVASFVQVSTDEVYGSLEHGSWTEDEPLRPNSPYSASKASGDLLALAHHVSHGLDVRVTRCSNNYGPRQFPEKLIPRFITLLMDGHRVPLYGDGLNVREWLHVDDHVRGIEAVRTRGRAGRVYNIGGGATLSNKELVGLLLEAAGADWGSVEYVEDRKGHDRRYAVDSTRIQRELGFAPAVDLADGLAATVAWYHKHRSWWEPLVPAGSLPA.

NAD(+)-binding positions include 13–14, 37–40, 63–64, 82–86, and T101; these read FI, DALT, DI, and LAAES. S86 is a binding site for substrate. T126 is a substrate binding site. The Proton donor role is filled by D127. Active-site proton acceptor residues include E128 and Y150. 150-154 contacts NAD(+); that stretch reads YSASK. N179 contacts substrate. An NAD(+)-binding site is contributed by N180. Substrate contacts are provided by residues 189–190, 205–207, R214, N249, and 272–276; these read KL, PLY, and DRKGH.

Belongs to the NAD(P)-dependent epimerase/dehydratase family. dTDP-glucose dehydratase subfamily. In terms of assembly, homodimer. Requires NAD(+) as cofactor.

It catalyses the reaction dTDP-alpha-D-glucose = dTDP-4-dehydro-6-deoxy-alpha-D-glucose + H2O. Its pathway is antibiotic biosynthesis; streptomycin biosynthesis. Functionally, involved in the biosynthesis of the streptose moiety of streptomycin. Catalyzes the dehydration of dTDP-D-glucose to form dTDP-6-deoxy-D-xylo-4-hexulose via a three-step process involving oxidation, dehydration and reduction. This chain is dTDP-glucose 4,6-dehydratase, found in Streptomyces griseus.